Here is a 329-residue protein sequence, read N- to C-terminus: Sex comb on midleg-like protein 1 (329 aa).

Positions 136–160 (SYSPTLPVSRRENNSPSNLPRPSFC) are disordered. Phosphoserine is present on residues S138 and S238. Positions 258–325 (WSVEAVVLFL…YYIDRLKQGK (68 aa)) constitute an SAM domain.

The protein belongs to the SCM family.

Its subcellular location is the nucleus. Its function is as follows. Putative Polycomb group (PcG) protein. PcG proteins act by forming multiprotein complexes, which are required to maintain the transcriptionally repressive state of homeotic genes throughout development. May be involved in spermatogenesis during sexual maturation. This Pongo pygmaeus (Bornean orangutan) protein is Sex comb on midleg-like protein 1 (SCML1).